A 294-amino-acid chain; its full sequence is Ankyrin repeat and SOCS box protein 9 (294 aa).

Position 1 is an N-acetylmethionine (M1). ANK repeat units follow at residues 35–64, 68–97, 101–130, 133–162, 166–195, and 198–227; these read SDWSPMHEAAIHGHQLSLRNLISQGWAVNI, DHVSPLHEACLGGHLSCVKILLKHGAQVNG, DWHTPLFNACVSGSWDCVNLLLQHGASVQP, DLASPIHEAARRGHVECVNSLIAYGGNIDH, HLGTPLYLACENQQRACVKKLLESGADVNQ, and GQDSPLHAVARTASEELACLLMDFGADTQA. S51 carries the phosphoserine modification. An SOCS box domain is found at 240–294; it reads PPESPLAQLFLEREGPPSLMQLCRLRIRKCFGIQQHHKITKLVLPEDLKQFLLHL.

Belongs to the ankyrin SOCS box (ASB) family. As to quaternary structure, substrate-recognition component of the ECS(ASB9) complex, composed of ASB9, CUL5, ELOB, ELOC and RNF7/RBX2. Predominantly expressed in testis, kidney, and liver.

It is found in the mitochondrion. It participates in protein modification; protein ubiquitination. Substrate-recognition component of a cullin-5-RING E3 ubiquitin-protein ligase complex (ECS complex, also named CRL5 complex), which mediates the ubiquitination and subsequent proteasomal degradation of target proteins. The ECS(ASB9) complex catalyzes ubiquitination of creatine kinases CKB and CKMT1A. Functionally, does not interact with the Elongin BC complex, likely to be a negative regulator of isoform 1. The protein is Ankyrin repeat and SOCS box protein 9 of Homo sapiens (Human).